A 368-amino-acid chain; its full sequence is Histone macroH2A1.1 (368 aa).

The tract at residues 154–177 (AVSSSSAAASSSSSASSSSSVAPK) is disordered. The 185-residue stretch at 184 to 368 (TILSKKTLHL…VYNAELINTN (185 aa)) folds into the Macro domain. Residues Asp203, Leu204, Gln225, Val226, Ser275, Gly313, Ser314, Gly315, Asn316, and Asn317 each contribute to the a glycoprotein site.

Belongs to the histone H2A family. As to quaternary structure, the nucleosome is a histone octamer containing two molecules each of H2A, H2B, H3 and H4 assembled in one H3-H4 heterotetramer and two H2A-H2B heterodimers.

Its subcellular location is the nucleus. The protein localises to the chromosome. Its function is as follows. Variant histone H2A which replaces conventional H2A in a subset of nucleosomes where it represses transcription. Nucleosomes wrap and compact DNA into chromatin, limiting DNA accessibility to the cellular machineries which require DNA as a template. Histones thereby play a central role in transcription regulation, DNA repair, DNA replication and chromosomal stability. DNA accessibility is regulated via a complex set of post-translational modifications of histones, also called histone code, and nucleosome remodeling. Functionally, specifically binds poly-ADP-ribose and plays a key role in NAD(+) metabolism. Able to bind to the ends of poly-ADP-ribose chains created by PARP1 and cap them. This prevents PARP1 from further addition of ADP-ribose and thus limits the consumption of nuclear NAD(+), allowing the cell to maintain proper NAD(+) levels in both the nucleus and the mitochondria to promote proper mitochondrial respiration. The chain is Histone macroH2A1.1 from Capsaspora owczarzaki (strain ATCC 30864).